Consider the following 745-residue polypeptide: Junction plakoglobin (745 aa).

M1 carries the N-acetylmethionine modification. T14 carries O-linked (GlcNAc) threonine glycosylation. Phosphoserine is present on residues S99 and S125. 12 ARM repeats span residues 132–171 (NYQD…QLSK), 172–215 (KEAS…LSHH), 216–255 (REGL…NLLL), 258–297 (EGAK…LLAY), 298–341 (GNQE…LSVC), 342–381 (PSNK…NLSD), 383–420 (ATKQ…NLTC), 423–464 (SKNK…HLTS), 470–510 (EMAQ…NLAL), 512–551 (PANH…QPYT), 574–613 (PMNR…ELAQ), and 615–661 (KEAA…PDYR). The tract at residues 132 to 297 (NYQDDAELAT…TTDCLQLLAY (166 aa)) is interaction with DSC1 and DSG1. S182 is subject to Phosphoserine. Positions 574–661 (PMNRMEIFRL…ISEDKNPDYR (88 aa)) are interaction with DSC1. 2 positions are modified to phosphoserine: S665 and S730.

It belongs to the beta-catenin family. As to quaternary structure, homodimer. Component of an E-cadherin/catenin adhesion complex composed of at least E-cadherin/CDH1 and gamma-catenin/JUP, and possibly alpha-catenin/CTNNA1; the complex is located to adherens junctions. The stable association of CTNNA1 is controversial as CTNNA1 was shown not to bind to F-actin when assembled in the complex. Interacts with MUC1. Interacts with CAV1. Interacts with PTPRJ. Interacts with DSG1. Interacts with DSC1 and DSC2. Interacts with PKP2. Interacts with PKP3 (via N-terminus); the interaction is required for PKP3 localization to desmosome cell-cell junctions. Interacts with DSG4. May be phosphorylated by FER. In terms of tissue distribution, expressed in the heart (at protein level).

Its subcellular location is the cell junction. It is found in the adherens junction. The protein resides in the desmosome. It localises to the cytoplasm. The protein localises to the cytoskeleton. Its subcellular location is the cell membrane. It is found in the nucleus. Its function is as follows. Common junctional plaque protein. The membrane-associated plaques are architectural elements in an important strategic position to influence the arrangement and function of both the cytoskeleton and the cells within the tissue. The presence of plakoglobin in both the desmosomes and in the intermediate junctions suggests that it plays a central role in the structure and function of submembranous plaques. Acts as a substrate for VE-PTP and is required by it to stimulate VE-cadherin function in endothelial cells. Can replace beta-catenin in E-cadherin/catenin adhesion complexes which are proposed to couple cadherins to the actin cytoskeleton. The polypeptide is Junction plakoglobin (Rattus norvegicus (Rat)).